The primary structure comprises 290 residues: Membrane protein insertase YidC (290 aa).

A signal peptide spans 1-19 (MKKKTLLPLFLGIMVFLAG). A lipid anchor (N-palmitoyl cysteine) is attached at cysteine 20. Cysteine 20 carries S-diacylglycerol cysteine lipidation. 5 consecutive transmembrane segments (helical) span residues 56 to 76 (YGLA…PFML), 134 to 154 (MLGC…YFVL), 176 to 196 (PDIW…YVSS), 207 to 224 (GYMM…ISLS), and 229 to 251 (LGLY…NIYY). The tract at residues 270-290 (HNGGSNKKGKNTQVVSKKKKK) is disordered.

It belongs to the OXA1/ALB3/YidC family. Type 2 subfamily.

The protein resides in the cell membrane. Required for the insertion and/or proper folding and/or complex formation of integral membrane proteins into the membrane. Involved in integration of membrane proteins that insert both dependently and independently of the Sec translocase complex, as well as at least some lipoproteins. This Staphylococcus aureus (strain MRSA252) protein is Membrane protein insertase YidC.